The sequence spans 986 residues: E3 ubiquitin-protein ligase Arkadia (986 aa).

Glycyl lysine isopeptide (Lys-Gly) (interchain with G-Cter in SUMO2) cross-links involve residues K19, K28, K34, K47, K59, K73, K87, K96, and K110. Basic and acidic residues predominate over residues H66–L89. Residues H66 to Q106 form a disordered region. A disordered region spans residues Q120–S191. Over residues S132–D151 the composition is skewed to low complexity. Polar residues predominate over residues R164 to K173. A Glycyl lysine isopeptide (Lys-Gly) (interchain with G-Cter in SUMO2) cross-link involves residue K173. Over residues S174 to W184 the composition is skewed to basic residues. Residues K198 and K218 each participate in a glycyl lysine isopeptide (Lys-Gly) (interchain with G-Cter in SUMO2) cross-link. Residues V241–S404 are interaction with AXIN1. Residues A248–L277 are disordered. Over residues S252 to T271 the composition is skewed to low complexity. The SUMO interaction motif 1 (SIM) signature appears at V300–E304. The SUMO interaction motif 2 (SIM) signature appears at E325 to V331. The tract at residues S337–Q373 is disordered. The span at H347–S357 shows a compositional bias: low complexity. The SUMO interaction motif 3 (SIM) motif lies at V382–T386. 5 disordered regions span residues E389–P471, Q506–E561, A610–M646, H659–V684, and I696–P719. Polar residues predominate over residues V395–V466. Basic residues predominate over residues H508–P522. Residues A551–E561 are compositionally biased toward polar residues. Positions N670–Q680 are enriched in pro residues. The ubiquitin binding stretch occupies residues Y907 to H909. Residues K915 and K919 each participate in a glycyl lysine isopeptide (Lys-Gly) (interchain with G-Cter in SUMO2) cross-link. Zn(2+)-binding residues include C934 and C937. An RING-type; atypical zinc finger spans residues C934 to R975. The ubiquitin binding stretch occupies residues R949–M953. Zn(2+) contacts are provided by H957 and C960.

The protein belongs to the Arkadia family. In terms of assembly, monomer. Interacts with SMAD6, SMAD7, AXIN1, AXIN2 and SKIL isoform SNON. Interacts with (phosphorylated) SMAD2 and SMAD3. Part of a complex containing RNF111, AXIN1 and SMAD7. Interacts (via SIM domains) with SUMO1 and SUMO2.

The protein localises to the nucleus. Its subcellular location is the cytoplasm. The protein resides in the PML body. The catalysed reaction is S-ubiquitinyl-[E2 ubiquitin-conjugating enzyme]-L-cysteine + [acceptor protein]-L-lysine = [E2 ubiquitin-conjugating enzyme]-L-cysteine + N(6)-ubiquitinyl-[acceptor protein]-L-lysine.. It participates in protein modification; protein ubiquitination. With respect to regulation, binds free ubiquitin non-covalently via its RING-type zinc finger. Ubiquitin-binding leads to enhance the E3 ubiquitin-protein ligase activity by stabilizing the ubiquitin-conjugating enzyme E2 (donor ubiquitin) in the 'closed' conformation and activating ubiquitin transfer. Functionally, E3 ubiquitin-protein ligase. Required for mesoderm patterning during embryonic development. Acts as an enhancer of the transcriptional responses of the SMAD2/SMAD3 effectors, which are activated downstream of BMP. Acts by mediating ubiquitination and degradation of SMAD inhibitors such as SMAD7, inducing their proteasomal degradation and thereby enhancing the transcriptional activity of TGF-beta and BMP. In addition to enhance transcription of SMAD2/SMAD3 effectors, also regulates their turnover by mediating their ubiquitination and subsequent degradation, coupling their activation with degradation, thereby ensuring that only effectors 'in use' are degraded. Activates SMAD3/SMAD4-dependent transcription by triggering signal-induced degradation of SNON isoform of SKIL. Associates with UBE2D2 as an E2 enzyme. Specifically binds polysumoylated chains via SUMO interaction motifs (SIMs) and mediates ubiquitination of sumoylated substrates. Catalyzes 'Lys-63'-linked ubiquitination of sumoylated XPC in response to UV irradiation, promoting nucleotide excision repair. Mediates ubiquitination and degradation of sumoylated PML. The regulation of the BMP-SMAD signaling is however independent of sumoylation and is not dependent of SUMO interaction motifs (SIMs). This Pongo abelii (Sumatran orangutan) protein is E3 ubiquitin-protein ligase Arkadia (RNF111).